Here is a 192-residue protein sequence, read N- to C-terminus: Phage-like element PBSX protein XkdU (192 aa).

It to B.subtilis YqcA.

The chain is Phage-like element PBSX protein XkdU (xkdU) from Bacillus subtilis (strain 168).